A 343-amino-acid polypeptide reads, in one-letter code: Protein RecA (343 aa).

66–73 lines the ATP pocket; it reads GPESSGKT.

Belongs to the RecA family.

It is found in the cytoplasm. Functionally, can catalyze the hydrolysis of ATP in the presence of single-stranded DNA, the ATP-dependent uptake of single-stranded DNA by duplex DNA, and the ATP-dependent hybridization of homologous single-stranded DNAs. It interacts with LexA causing its activation and leading to its autocatalytic cleavage. The protein is Protein RecA of Nitrosomonas europaea (strain ATCC 19718 / CIP 103999 / KCTC 2705 / NBRC 14298).